The following is a 503-amino-acid chain: ATP synthase subunit alpha (503 aa).

ATP is bound at residue 169–176 (GDRSTGKT).

The protein belongs to the ATPase alpha/beta chains family. F-type ATPases have 2 components, CF(1) - the catalytic core - and CF(0) - the membrane proton channel. CF(1) has five subunits: alpha(3), beta(3), gamma(1), delta(1), epsilon(1). CF(0) has three main subunits: a(1), b(2) and c(9-12). The alpha and beta chains form an alternating ring which encloses part of the gamma chain. CF(1) is attached to CF(0) by a central stalk formed by the gamma and epsilon chains, while a peripheral stalk is formed by the delta and b chains.

The protein localises to the cell membrane. The catalysed reaction is ATP + H2O + 4 H(+)(in) = ADP + phosphate + 5 H(+)(out). Functionally, produces ATP from ADP in the presence of a proton gradient across the membrane. The alpha chain is a regulatory subunit. This chain is ATP synthase subunit alpha, found in Dehalococcoides mccartyi (strain ATCC BAA-2100 / JCM 16839 / KCTC 5957 / BAV1).